The sequence spans 238 residues: Alpha-tubulin N-acetyltransferase (238 aa).

Residues 1–196 (MEFDFDISQS…NNFVVFEDLF (196 aa)) form the N-acetyltransferase domain. Residues 129 to 142 (FYVH…GNGK) and 165 to 174 (SFKFLSFLQK) each bind acetyl-CoA.

This sequence belongs to the acetyltransferase ATAT1 family.

It carries out the reaction L-lysyl-[alpha-tubulin] + acetyl-CoA = N(6)-acetyl-L-lysyl-[alpha-tubulin] + CoA + H(+). In terms of biological role, specifically acetylates 'Lys-40' in alpha-tubulin on the lumenal side of microtubules. Promotes microtubule destabilization and accelerates microtubule dynamics; this activity may be independent of acetylation activity. Acetylates alpha-tubulin with a slow enzymatic rate, due to a catalytic site that is not optimized for acetyl transfer. Enters the microtubule through each end and diffuses quickly throughout the lumen of microtubules. Acetylates only long/old microtubules because of its slow acetylation rate since it does not have time to act on dynamically unstable microtubules before the enzyme is released. The protein is Alpha-tubulin N-acetyltransferase of Trichoplax adhaerens (Trichoplax reptans).